Consider the following 145-residue polypeptide: 3-hydroxyacyl-[acyl-carrier-protein] dehydratase FabZ (145 aa).

His47 is an active-site residue.

Belongs to the thioester dehydratase family. FabZ subfamily.

It is found in the cytoplasm. It carries out the reaction a (3R)-hydroxyacyl-[ACP] = a (2E)-enoyl-[ACP] + H2O. Its function is as follows. Involved in unsaturated fatty acids biosynthesis. Catalyzes the dehydration of short chain beta-hydroxyacyl-ACPs and long chain saturated and unsaturated beta-hydroxyacyl-ACPs. The chain is 3-hydroxyacyl-[acyl-carrier-protein] dehydratase FabZ from Vesicomyosocius okutanii subsp. Calyptogena okutanii (strain HA).